The following is a 219-amino-acid chain: ATP-dependent Clp protease proteolytic subunit (219 aa).

Ser101 serves as the catalytic Nucleophile. His126 is a catalytic residue.

This sequence belongs to the peptidase S14 family. In terms of assembly, component of the chloroplastic Clp protease core complex.

It is found in the plastid. The protein resides in the chloroplast stroma. It carries out the reaction Hydrolysis of proteins to small peptides in the presence of ATP and magnesium. alpha-casein is the usual test substrate. In the absence of ATP, only oligopeptides shorter than five residues are hydrolyzed (such as succinyl-Leu-Tyr-|-NHMec, and Leu-Tyr-Leu-|-Tyr-Trp, in which cleavage of the -Tyr-|-Leu- and -Tyr-|-Trp bonds also occurs).. In terms of biological role, cleaves peptides in various proteins in a process that requires ATP hydrolysis. Has a chymotrypsin-like activity. Plays a major role in the degradation of misfolded proteins. This is ATP-dependent Clp protease proteolytic subunit from Chara vulgaris (Common stonewort).